A 298-amino-acid polypeptide reads, in one-letter code: N-acetylmuramic acid 6-phosphate etherase (298 aa).

The 164-residue stretch at 55 to 218 (IHTQVSGGGR…STGLMIKSGK (164 aa)) folds into the SIS domain. Glu83 (proton donor) is an active-site residue. Residue Glu114 is part of the active site.

This sequence belongs to the GCKR-like family. MurNAc-6-P etherase subfamily. In terms of assembly, homodimer.

The catalysed reaction is N-acetyl-D-muramate 6-phosphate + H2O = N-acetyl-D-glucosamine 6-phosphate + (R)-lactate. The protein operates within amino-sugar metabolism; 1,6-anhydro-N-acetylmuramate degradation. Its pathway is amino-sugar metabolism; N-acetylmuramate degradation. It functions in the pathway cell wall biogenesis; peptidoglycan recycling. In terms of biological role, specifically catalyzes the cleavage of the D-lactyl ether substituent of MurNAc 6-phosphate, producing GlcNAc 6-phosphate and D-lactate. Together with AnmK, is also required for the utilization of anhydro-N-acetylmuramic acid (anhMurNAc) either imported from the medium or derived from its own cell wall murein, and thus plays a role in cell wall recycling. This Escherichia coli O6:K15:H31 (strain 536 / UPEC) protein is N-acetylmuramic acid 6-phosphate etherase.